The sequence spans 277 residues: Cis-3,4-dihydrophenanthrene-3,4-diol dehydrogenase (277 aa).

NAD(+)-binding positions include 10–37 and aspartate 60; that span reads FLTGGVAGLGRALVKRLVEEGANVTVLD. Serine 143 is a substrate binding site. The active-site Proton acceptor is the tyrosine 156. Residue lysine 160 coordinates NAD(+).

Belongs to the short-chain dehydrogenases/reductases (SDR) family. In terms of assembly, homotetramer.

It catalyses the reaction (3S,4R)-3,4-dihydrophenanthrene-3,4-diol + NAD(+) = phenanthrene-3,4-diol + NADH + H(+). Its activity is regulated as follows. Inhibited by heavy metal such as Hg(2+) and by p-chloromercuribenzoate. In terms of biological role, involved in the degradation of phenanthrene. Catalyzes the oxidation of cis-phenanthrene dihydrodiol (PDD) to yield phenanthrenediol. It can use either NAD or NADP as electron acceptor, however NAD is preferred to NADP. In Alcaligenes faecalis, this protein is Cis-3,4-dihydrophenanthrene-3,4-diol dehydrogenase (phnB).